The chain runs to 444 residues: Deoxyguanosinetriphosphate triphosphohydrolase-like protein (444 aa).

The segment at 1-26 (MIASPWHERRLNEDKKRRNDHRSPFQ) is disordered. Positions 59 to 250 (RLTHSLEVSQ…MELADDIAYA (192 aa)) constitute an HD domain.

This sequence belongs to the dGTPase family. Type 2 subfamily.

This chain is Deoxyguanosinetriphosphate triphosphohydrolase-like protein, found in Shewanella woodyi (strain ATCC 51908 / MS32).